Reading from the N-terminus, the 491-residue chain is Glutamyl-tRNA(Gln) amidotransferase subunit A (491 aa).

Catalysis depends on charge relay system residues K76 and S154. The active-site Acyl-ester intermediate is the S178.

It belongs to the amidase family. GatA subfamily. As to quaternary structure, heterotrimer of A, B and C subunits.

The enzyme catalyses L-glutamyl-tRNA(Gln) + L-glutamine + ATP + H2O = L-glutaminyl-tRNA(Gln) + L-glutamate + ADP + phosphate + H(+). In terms of biological role, allows the formation of correctly charged Gln-tRNA(Gln) through the transamidation of misacylated Glu-tRNA(Gln) in organisms which lack glutaminyl-tRNA synthetase. The reaction takes place in the presence of glutamine and ATP through an activated gamma-phospho-Glu-tRNA(Gln). This chain is Glutamyl-tRNA(Gln) amidotransferase subunit A, found in Cereibacter sphaeroides (strain ATCC 17023 / DSM 158 / JCM 6121 / CCUG 31486 / LMG 2827 / NBRC 12203 / NCIMB 8253 / ATH 2.4.1.) (Rhodobacter sphaeroides).